The following is a 746-amino-acid chain: Exostosin-1 (746 aa).

Residues 1 to 7 (MQAKKRY) lie on the Cytoplasmic side of the membrane. The chain crosses the membrane as a helical; Signal-anchor for type II membrane protein span at residues 8-28 (FILLSAGSCLALLFYFGGLQF). At 29–746 (RASRSHSRRE…RKKYRDIERL (718 aa)) the chain is on the lumenal side. N-linked (GlcNAc...) asparagine glycosylation occurs at asparagine 89. 2 disulfide bridges follow: cysteine 98–cysteine 103 and cysteine 109–cysteine 152. A protein is bound by residues leucine 166 and tyrosine 203. Positions 267, 269, 271, and 280 each coordinate UDP. An intrachain disulfide couples cysteine 298 to cysteine 312. Histidine 300 is a binding site for a protein. 2 residues coordinate UDP: tyrosine 319 and tyrosine 324. Residue asparagine 330 is glycosylated (N-linked (GlcNAc...) asparagine). Cystine bridges form between cysteine 334–cysteine 355 and cysteine 652–cysteine 704. Arginine 346 and glutamate 349 together coordinate UDP.

Belongs to the glycosyltransferase 47 family. In terms of assembly, part of the heparan sulfate polymerase, a dimeric complex composed of EXT1 and EXT2. Could also form homooligomeric complexes. Interacts with NDST1. Post-translationally, N-glycosylated.

The protein resides in the golgi apparatus membrane. Its subcellular location is the golgi apparatus. It localises to the cis-Golgi network membrane. It is found in the endoplasmic reticulum membrane. The catalysed reaction is 3-O-{alpha-D-GlcNAc-[(1-&gt;4)-beta-D-GlcA-(1-&gt;4)-alpha-D-GlcNAc](n)-(1-&gt;4)-beta-D-GlcA-(1-&gt;3)-beta-D-Gal-(1-&gt;3)-beta-D-Gal-(1-&gt;4)-beta-D-Xyl}-L-seryl-[protein] + UDP-alpha-D-glucuronate = 3-O-{[(1-&gt;4)-beta-D-GlcA-(1-&gt;4)-alpha-D-GlcNAc](n+1)-(1-&gt;4)-beta-D-GlcA-(1-&gt;3)-beta-D-Gal-(1-&gt;3)-beta-D-Gal-(1-&gt;4)-beta-D-Xyl}-L-seryl-[protein] + UDP + H(+). It functions in the pathway protein modification; protein glycosylation. Its function is as follows. Glycosyltransferase forming with EXT2 the heterodimeric heparan sulfate polymerase which catalyzes the elongation of the heparan sulfate glycan backbone. Glycan backbone extension consists in the alternating transfer of (1-&gt;4)-beta-D-GlcA and (1-&gt;4)-alpha-D-GlcNAc residues from their respective UDP-sugar donors. Both EXT1 and EXT2 are required for the full activity of the polymerase since EXT1 bears the N-acetylglucosaminyl-proteoglycan 4-beta-glucuronosyltransferase activity within the complex while EXT2 carries the glucuronosyl-N-acetylglucosaminyl-proteoglycan 4-alpha-N-acetylglucosaminyltransferase activity. Heparan sulfate proteoglycans are ubiquitous components of the extracellular matrix and play an important role in tissue homeostasis and signaling. The sequence is that of Exostosin-1 (EXT1) from Papio anubis (Olive baboon).